Consider the following 428-residue polypeptide: Nematode resistance protein-like HSPRO1 (428 aa).

In terms of assembly, interacts with SNF4.

It is found in the cytoplasm. Positive regulator of basal resistance. The protein is Nematode resistance protein-like HSPRO1 (HSPRO1) of Arabidopsis thaliana (Mouse-ear cress).